A 409-amino-acid polypeptide reads, in one-letter code: 2-methylfumaryl-CoA isomerase (409 aa).

The active-site Nucleophile is Asp165.

It belongs to the CoA-transferase III family. Mesaconyl-CoA isomerase subfamily. Homodimer.

It catalyses the reaction 2-methylfumaryl-CoA = 3-methylfumaryl-CoA. Partially inhibited by hydroxylamine. In terms of biological role, involved in the glyoxylate assimilation cycle used to regenerate acetyl-CoA and produce pyruvate as universal precursor for biosynthesis. This reaction involves an intramolecular CoA transferase that catalyzes the reversible transfer of the CoA moiety from the C1-carboxyl group of mesaconyl-CoA to the C4-carboxyl group. It does not require free mesaconate as CoA acceptor. This Chloroflexus aurantiacus (strain ATCC 29366 / DSM 635 / J-10-fl) protein is 2-methylfumaryl-CoA isomerase (mct).